Reading from the N-terminus, the 388-residue chain is N5-carboxyaminoimidazole ribonucleotide synthase (388 aa).

Residues K105, K140, 174–177 (ESFV), E182, and 267–268 (NE) each bind ATP. In terms of domain architecture, ATP-grasp spans 109–297 (RHFLQNLGLP…QFALQLQAVT (189 aa)).

This sequence belongs to the PurK/PurT family. As to quaternary structure, homodimer.

It catalyses the reaction 5-amino-1-(5-phospho-beta-D-ribosyl)imidazole + hydrogencarbonate + ATP = 5-carboxyamino-1-(5-phospho-D-ribosyl)imidazole + ADP + phosphate + 2 H(+). It participates in purine metabolism; IMP biosynthesis via de novo pathway; 5-amino-1-(5-phospho-D-ribosyl)imidazole-4-carboxylate from 5-amino-1-(5-phospho-D-ribosyl)imidazole (N5-CAIR route): step 1/2. Catalyzes the ATP-dependent conversion of 5-aminoimidazole ribonucleotide (AIR) and HCO(3)(-) to N5-carboxyaminoimidazole ribonucleotide (N5-CAIR). The chain is N5-carboxyaminoimidazole ribonucleotide synthase from Synechocystis sp. (strain ATCC 27184 / PCC 6803 / Kazusa).